A 392-amino-acid chain; its full sequence is Pyruvate synthase subunit PorA (392 aa).

As to quaternary structure, heterotetramer of one alpha, one beta, one delta and one gamma chain.

It catalyses the reaction 2 oxidized [2Fe-2S]-[ferredoxin] + pyruvate + CoA = 2 reduced [2Fe-2S]-[ferredoxin] + acetyl-CoA + CO2 + H(+). This is Pyruvate synthase subunit PorA (porA) from Thermotoga maritima (strain ATCC 43589 / DSM 3109 / JCM 10099 / NBRC 100826 / MSB8).